The sequence spans 130 residues: Histone H2A type 1-B/E (130 aa).

The tract at residues 1 to 22 (MSGRGKQGGKARAKAKTRSSRA) is disordered. An N-acetylserine modification is found at Ser2. Ser2 carries the phosphoserine; by RPS6KA5 modification. A Citrulline; alternate modification is found at Arg4. At Arg4 the chain carries Symmetric dimethylarginine; by PRMT5; alternate. 2 positions are modified to N6-(2-hydroxyisobutyryl)lysine; alternate: Lys6 and Lys10. N6-acetyllysine; alternate is present on Lys6. Over residues 7–19 (QGGKARAKAKTRS) the composition is skewed to basic residues. Lys10 and Lys14 each carry N6-(beta-hydroxybutyryl)lysine; alternate. Lys10 is subject to N6-lactoyllysine; alternate. At Lys10 the chain carries N6-succinyllysine; alternate. Lys14 is covalently cross-linked (Glycyl lysine isopeptide (Lys-Gly) (interchain with G-Cter in ubiquitin); alternate). Residue Lys16 forms a Glycyl lysine isopeptide (Lys-Gly) (interchain with G-Cter in ubiquitin) linkage. The residue at position 37 (Lys37) is an N6-(2-hydroxyisobutyryl)lysine; alternate. Lys37 is subject to N6-(beta-hydroxybutyryl)lysine; alternate. Residue Lys37 is modified to N6-crotonyllysine; alternate. 2 positions are modified to N6-(2-hydroxyisobutyryl)lysine: Lys75 and Lys76. Lys96 is modified (N6-(2-hydroxyisobutyryl)lysine; alternate). Lys96 carries the post-translational modification N6-(beta-hydroxybutyryl)lysine; alternate. The residue at position 96 (Lys96) is an N6-succinyllysine; alternate. Position 96 is an N6-glutaryllysine; alternate (Lys96). Gln105 bears the N5-methylglutamine mark. Lys119 carries the post-translational modification N6-(2-hydroxyisobutyryl)lysine; alternate. Position 119 is an N6-(beta-hydroxybutyryl)lysine; alternate (Lys119). N6-crotonyllysine; alternate occurs at positions 119 and 120. 2 positions are modified to N6-glutaryllysine; alternate: Lys119 and Lys120. A Glycyl lysine isopeptide (Lys-Gly) (interchain with G-Cter in ubiquitin); alternate cross-link involves residue Lys120. Phosphothreonine; by DCAF1 is present on Thr121. N6-crotonyllysine; alternate is present on Lys126. Lys126 carries the N6-glutaryllysine; alternate modification.

Belongs to the histone H2A family. As to quaternary structure, the nucleosome is a histone octamer containing two molecules each of H2A, H2B, H3 and H4 assembled in one H3-H4 heterotetramer and two H2A-H2B heterodimers. The octamer wraps approximately 147 bp of DNA. Post-translationally, deiminated on Arg-4 in granulocytes upon calcium entry. Monoubiquitination of Lys-120 (H2AK119Ub) by RING1, TRIM37 and RNF2/RING2 complex gives a specific tag for epigenetic transcriptional repression and participates in X chromosome inactivation of female mammals. It is involved in the initiation of both imprinted and random X inactivation. Ubiquitinated H2A is enriched in inactive X chromosome chromatin. Ubiquitination of H2A functions downstream of methylation of 'Lys-27' of histone H3 (H3K27me). H2AK119Ub by RNF2/RING2 can also be induced by ultraviolet and may be involved in DNA repair. Monoubiquitination of Lys-120 (H2AK119Ub) by TRIM37 may promote transformation of cells in a number of breast cancers. Following DNA double-strand breaks (DSBs), it is ubiquitinated through 'Lys-63' linkage of ubiquitin moieties by the E2 ligase UBE2N and the E3 ligases RNF8 and RNF168, leading to the recruitment of repair proteins to sites of DNA damage. Ubiquitination at Lys-14 and Lys-16 (H2AK13Ub and H2AK15Ub, respectively) in response to DNA damage is initiated by RNF168 that mediates monoubiquitination at these 2 sites, and 'Lys-63'-linked ubiquitin are then conjugated to monoubiquitin; RNF8 is able to extend 'Lys-63'-linked ubiquitin chains in vitro. Deubiquitinated by USP51 at Lys-14 and Lys-16 (H2AK13Ub and H2AK15Ub, respectively) after damaged DNA is repaired. H2AK119Ub and ionizing radiation-induced 'Lys-63'-linked ubiquitination (H2AK13Ub and H2AK15Ub) are distinct events. In terms of processing, phosphorylation on Ser-2 (H2AS1ph) is enhanced during mitosis. Phosphorylation on Ser-2 by RPS6KA5/MSK1 directly represses transcription. Acetylation of H3 inhibits Ser-2 phosphorylation by RPS6KA5/MSK1. Phosphorylation at Thr-121 (H2AT120ph) by DCAF1 is present in the regulatory region of many tumor suppresor genes and down-regulates their transcription. Post-translationally, glutamine methylation at Gln-105 (H2AQ104me) by FBL is specifically dedicated to polymerase I. It is present at 35S ribosomal DNA locus and impairs binding of the FACT complex. Symmetric dimethylation on Arg-4 by the PRDM1/PRMT5 complex may play a crucial role in the germ-cell lineage. In terms of processing, crotonylation (Kcr) is specifically present in male germ cells and marks testis-specific genes in post-meiotic cells, including X-linked genes that escape sex chromosome inactivation in haploid cells. Crotonylation marks active promoters and enhancers and confers resistance to transcriptional repressors. It is also associated with post-meiotically activated genes on autosomes. Post-translationally, lactylated in macrophages by EP300/P300 by using lactoyl-CoA directly derived from endogenous or exogenous lactate, leading to stimulates gene transcription.

It is found in the nucleus. The protein localises to the chromosome. Core component of nucleosome. Nucleosomes wrap and compact DNA into chromatin, limiting DNA accessibility to the cellular machineries which require DNA as a template. Histones thereby play a central role in transcription regulation, DNA repair, DNA replication and chromosomal stability. DNA accessibility is regulated via a complex set of post-translational modifications of histones, also called histone code, and nucleosome remodeling. This chain is Histone H2A type 1-B/E, found in Homo sapiens (Human).